We begin with the raw amino-acid sequence, 245 residues long: tRNA1(Val) (adenine(37)-N6)-methyltransferase (245 aa).

This sequence belongs to the methyltransferase superfamily. tRNA (adenine-N(6)-)-methyltransferase family.

Its subcellular location is the cytoplasm. The catalysed reaction is adenosine(37) in tRNA1(Val) + S-adenosyl-L-methionine = N(6)-methyladenosine(37) in tRNA1(Val) + S-adenosyl-L-homocysteine + H(+). Functionally, specifically methylates the adenine in position 37 of tRNA(1)(Val) (anticodon cmo5UAC). The protein is tRNA1(Val) (adenine(37)-N6)-methyltransferase of Citrobacter koseri (strain ATCC BAA-895 / CDC 4225-83 / SGSC4696).